A 250-amino-acid polypeptide reads, in one-letter code: Flavin-dependent thymidylate synthase (250 aa).

A ThyX domain is found at 7–233 (LSVELIACSS…PTVFGDFEIE (227 aa)). DUMP-binding positions include 92–95 (ELVR), 103–107 (QLSQR), and Arg172. FAD-binding positions include 95 to 97 (RHR) and Gln103. The ThyX motif signature appears at 95–105 (RHRHFSFSQLS). Residues 188-190 (NFR) and His194 contribute to the FAD site. DUMP is bound at residue Arg199. The active-site Involved in ionization of N3 of dUMP, leading to its activation is the Arg199.

This sequence belongs to the thymidylate synthase ThyX family. In terms of assembly, homotetramer. FAD is required as a cofactor.

The enzyme catalyses dUMP + (6R)-5,10-methylene-5,6,7,8-tetrahydrofolate + NADPH + H(+) = dTMP + (6S)-5,6,7,8-tetrahydrofolate + NADP(+). The protein operates within pyrimidine metabolism; dTTP biosynthesis. Functionally, catalyzes the reductive methylation of 2'-deoxyuridine-5'-monophosphate (dUMP) to 2'-deoxythymidine-5'-monophosphate (dTMP) while utilizing 5,10-methylenetetrahydrofolate (mTHF) as the methyl donor, and NADPH and FADH(2) as the reductant. This chain is Flavin-dependent thymidylate synthase, found in Corynebacterium glutamicum (strain ATCC 13032 / DSM 20300 / JCM 1318 / BCRC 11384 / CCUG 27702 / LMG 3730 / NBRC 12168 / NCIMB 10025 / NRRL B-2784 / 534).